We begin with the raw amino-acid sequence, 130 residues long: DNA-directed RNA polymerase subunit omega (130 aa).

A disordered region spans residues 110–130 (EELLKGLEGLAPPEEQPEEDE).

Belongs to the RNA polymerase subunit omega family. In terms of assembly, the RNAP catalytic core consists of 2 alpha, 1 beta, 1 beta' and 1 omega subunit. When a sigma factor is associated with the core the holoenzyme is formed, which can initiate transcription.

The catalysed reaction is RNA(n) + a ribonucleoside 5'-triphosphate = RNA(n+1) + diphosphate. Promotes RNA polymerase assembly. Latches the N- and C-terminal regions of the beta' subunit thereby facilitating its interaction with the beta and alpha subunits. The polypeptide is DNA-directed RNA polymerase subunit omega (Bradyrhizobium sp. (strain BTAi1 / ATCC BAA-1182)).